We begin with the raw amino-acid sequence, 179 residues long: GTP-dependent dephospho-CoA kinase (179 aa).

GTP-binding residues include Asp55, Val57, Asp74, Lys76, and Glu128.

This sequence belongs to the GTP-dependent DPCK family.

The enzyme catalyses 3'-dephospho-CoA + GTP = GDP + CoA + H(+). Its pathway is cofactor biosynthesis; coenzyme A biosynthesis. In terms of biological role, catalyzes the GTP-dependent phosphorylation of the 3'-hydroxyl group of dephosphocoenzyme A to form coenzyme A (CoA). This chain is GTP-dependent dephospho-CoA kinase, found in Saccharolobus islandicus (strain M.16.4 / Kamchatka #3) (Sulfolobus islandicus).